Here is a 169-residue protein sequence, read N- to C-terminus: Putative phosphoesterase SH1944 (169 aa).

The Proton donor role is filled by histidine 34. 2 consecutive short sequence motifs (HXTX) follow at residues 34-37 (HITI) and 115-118 (HFTI). Histidine 115 functions as the Proton acceptor in the catalytic mechanism.

This sequence belongs to the 2H phosphoesterase superfamily. YjcG family.

The chain is Putative phosphoesterase SH1944 from Staphylococcus haemolyticus (strain JCSC1435).